We begin with the raw amino-acid sequence, 438 residues long: UDP-N-acetylmuramoylalanine--D-glutamate ligase (438 aa).

112 to 118 (GSNGKST) serves as a coordination point for ATP.

Belongs to the MurCDEF family.

The protein resides in the cytoplasm. The catalysed reaction is UDP-N-acetyl-alpha-D-muramoyl-L-alanine + D-glutamate + ATP = UDP-N-acetyl-alpha-D-muramoyl-L-alanyl-D-glutamate + ADP + phosphate + H(+). It functions in the pathway cell wall biogenesis; peptidoglycan biosynthesis. In terms of biological role, cell wall formation. Catalyzes the addition of glutamate to the nucleotide precursor UDP-N-acetylmuramoyl-L-alanine (UMA). In Salmonella choleraesuis (strain SC-B67), this protein is UDP-N-acetylmuramoylalanine--D-glutamate ligase.